We begin with the raw amino-acid sequence, 2089 residues long: Rho GTPase-activating protein 32 (2089 aa).

Residues 24 to 52 are disordered; it reads TQLTDGDEEEREESFRKMKSSIHSEEDDF. One can recognise a PX; atypical domain in the interval 131 to 245; that stretch reads GSIQLSLSEE…LTWMEIDNKG (115 aa). The SH3 domain occupies 259 to 321; sequence PAVGAAHVIK…PGHCVELINQ (63 aa). Positions 372–567 constitute a Rho-GAP domain; that stretch reads CDLGEHLLNS…FILNHVDVLF (196 aa). Residues serine 706, serine 709, serine 732, and serine 738 each carry the phosphoserine modification. Over residues 828–837 the composition is skewed to basic and acidic residues; the sequence is KLSPSKKDAE. Residues 828–858 form a disordered region; the sequence is KLSPSKKDAEAGGSQSQTPGSTASSEPVSPV. Residues 840-854 are compositionally biased toward polar residues; that stretch reads GSQSQTPGSTASSEP. Serine 852, serine 856, serine 892, and serine 952 each carry phosphoserine. Disordered regions lie at residues 955–1037, 1119–1141, and 1154–1197; these read QLQL…PPPP, CNQPLPEAAAMGGPTQSNTTDSG, and LHRN…SVST. Composition is skewed to polar residues over residues 998 to 1014 and 1132 to 1141; these read LSSQSKAVPSGQSQTGA and PTQSNTTDSG. Over residues 1175 to 1191 the composition is skewed to basic and acidic residues; that stretch reads DSEKSDDHGSFPEDHAG. Residue serine 1206 is modified to Phosphoserine. The disordered stretch occupies residues 1221-1368; it reads GTSVDKPHHS…GDPAPIFLSD (148 aa). A compositionally biased stretch (basic and acidic residues) spans 1225-1235; it reads DKPHHSSELTD. Over residues 1262 to 1275 the composition is skewed to low complexity; that stretch reads TATMAYMMATPARA. Residues 1395–1714 are interaction with GAB2; sequence RAPPLHLRAE…YNYAGLPPRP (320 aa). Asymmetric dimethylarginine is present on residues arginine 1526 and arginine 1536. Serine 1588 is subject to Phosphoserine. Positions 1688–2089 are interaction with FYN; the sequence is SSRDFAFYNP…PHPDTQIHAE (402 aa). 2 disordered regions span residues 1801 to 1865 and 1881 to 2002; these read PGKT…QSSL and RAHQ…LERD. Residues 1826-1841 are compositionally biased toward basic and acidic residues; the sequence is GDERFYRKHPESEFDR. Over residues 1850–1865 the composition is skewed to polar residues; the sequence is STQAEKPSLPQKQSSL. The span at 1881–1892 shows a compositional bias: basic and acidic residues; it reads RAHQEASHRQLC. The span at 1918–1939 shows a compositional bias: polar residues; the sequence is SEPSNYHNSGKYMTSGQGSLTL. Composition is skewed to basic and acidic residues over residues 1940–1954 and 1961–1975; these read NHKEVRLPKDLDRPR and PEKHSRDCYKEEEHF. Arginine 2039 is subject to Omega-N-methylarginine.

The protein belongs to the PX domain-containing GAP family. In terms of assembly, interacts with NTRK1 (via cytoplasmic domain); the interaction is independent of the phosphorylation state of NTRK1. Interacts with SHC3 (via SH2 domain). Interacts with RASA1 (via SH3 domain); the interaction is necessary for the Ras activation and cell transforming activities of ARHGAP32. Interacts with GAB1 and GAB2. Interacts with CRK and CRKL. Found in a complex with CRKL and BCAR1; upon EGF stimulation BCAR1 may be replaced by EGFR. Interacts with NCK1 (via SH3 domain); NCK1 recruits phosphorylated BCAR1 to the complex. Isoform 2 interacts with FYN; the interaction appears to be dependent on tyrosine phosphorylation of ARHGAP32. Interacts with EGFR; the interaction requires EGF stimulation and is increased by SHC3. Interacts with CDC42; the interaction requires constitutively active CDC42. Interacts with CTNNB1, DLG4, CDH2 and GRIN2B. Interacts with GPHN. In terms of processing, isoform 2 is phosphorylated on multiple tyrosine residues by FYN. Phosphorylated tyrosine residues undergo dephosphorylation after stimulation of NMDA receptors. Phosphorylated in vitro by CaMK2 in the presence of calmodulin and calcium; which inhibits GAP activity. In terms of tissue distribution, isoform 1 and isoform 2 are highly expressed in brain, specially in cortex, corpus striatum, hippocampus and thalamus. Low levels in cerebellum, colon, small intestine, and kidney.

Its subcellular location is the postsynaptic density. The protein resides in the cell projection. It localises to the dendritic spine. It is found in the cytoplasm. The protein localises to the cell cortex. Its subcellular location is the endosome membrane. The protein resides in the golgi apparatus membrane. It localises to the endoplasmic reticulum membrane. It is found in the membrane. GTPase-activating protein (GAP) promoting GTP hydrolysis on RHOA, CDC42 and RAC1 small GTPases. May be involved in the differentiation of neuronal cells during the formation of neurite extensions. Involved in NMDA receptor activity-dependent actin reorganization in dendritic spines. May mediate cross-talks between Ras- and Rho-regulated signaling pathways in cell growth regulation. Isoform 2 has higher GAP activity. This chain is Rho GTPase-activating protein 32 (Arhgap32), found in Mus musculus (Mouse).